A 231-amino-acid chain; its full sequence is NADH-ubiquinone oxidoreductase chain 4 (231 aa).

7 helical membrane passes run 1 to 21 (PIAG…YGII), 34 to 54 (VFLP…LTCL), 61 to 80 (SLIA…AIII), 84 to 106 (WGLS…LFCL), 128 to 148 (ILPM…ATPP), 156 to 176 (LLII…LGLS), and 211 to 231 (LLMI…ELVI).

The protein belongs to the complex I subunit 4 family.

The protein resides in the mitochondrion membrane. The enzyme catalyses a ubiquinone + NADH + 5 H(+)(in) = a ubiquinol + NAD(+) + 4 H(+)(out). Its function is as follows. Core subunit of the mitochondrial membrane respiratory chain NADH dehydrogenase (Complex I) that is believed to belong to the minimal assembly required for catalysis. Complex I functions in the transfer of electrons from NADH to the respiratory chain. The immediate electron acceptor for the enzyme is believed to be ubiquinone. The polypeptide is NADH-ubiquinone oxidoreductase chain 4 (MT-ND4) (Tropidolaemus wagleri (Wagler's pit viper)).